The following is a 226-amino-acid chain: RING-H2 finger protein ATL75 (226 aa).

A helical transmembrane segment spans residues 60 to 80 (LMLLSVLICGIICCLGLHYII). The RING-type; atypical zinc finger occupies 136–178 (CVICLSDFVSGEQIRMLPKCHHGFHVRCIDKWLQQHLTCPKCR).

It belongs to the RING-type zinc finger family. ATL subfamily.

The protein resides in the membrane. It catalyses the reaction S-ubiquitinyl-[E2 ubiquitin-conjugating enzyme]-L-cysteine + [acceptor protein]-L-lysine = [E2 ubiquitin-conjugating enzyme]-L-cysteine + N(6)-ubiquitinyl-[acceptor protein]-L-lysine.. It participates in protein modification; protein ubiquitination. The chain is RING-H2 finger protein ATL75 (ATL75) from Arabidopsis thaliana (Mouse-ear cress).